The sequence spans 612 residues: Zinc metalloproteinase-disintegrin-like berythractivase (612 aa).

The signal sequence occupies residues 1–20 (MIQVLLVIICLEAFPYQGSS). A propeptide spanning residues 21–187 (IILESGNVND…EPIKKASLLN (167 aa)) is cleaved from the precursor. The 197-residue stretch at 200–396 (KYVEFVVVLD…NRPQCLLNKP (197 aa)) folds into the Peptidase M12B domain. E203 contacts Ca(2+). N260 is a glycosylation site (N-linked (GlcNAc...) asparagine). D287 contributes to the Ca(2+) binding site. 3 cysteine pairs are disulfide-bonded: C311–C391, C351–C375, and C353–C358. H336 lines the Zn(2+) pocket. The active site involves E337. Residues H340 and H346 each coordinate Zn(2+). A glycan (N-linked (GlcNAc...) asparagine) is linked at N348. N374 is a glycosylation site (N-linked (GlcNAc...) asparagine). Ca(2+) is bound by residues C391, N394, V406, N409, L411, E413, E416, and D419. Positions 404–490 (PPVCGNELLE…DCPMDDFQRN (87 aa)) constitute a Disintegrin domain. Disulfide bonds link C407–C436, C418–C431, C420–C426, C430–C453, C444–C450, C449–C475, C462–C482, C469–C501, C494–C506, C513–C563, C528–C574, C541–C551, C558–C600, and C594–C605. N-linked (GlcNAc...) asparagine glycosylation is present at N432. The D/ECD-tripeptide motif lies at 468 to 470 (DCD). Ca(2+) is bound by residues D470, L471, E473, and D485.

It belongs to the venom metalloproteinase (M12B) family. P-III subfamily. P-IIIa sub-subfamily. Monomer. Zn(2+) serves as cofactor. Highly glycosylated. Expressed by the venom gland.

Its subcellular location is the secreted. Inhibited by EDTA and o-phenanthroline. Not inhibited by PMSF, benzamidine, irreversible serine-proteinase inhibitors and cysteine proteinase inhibitor E-64. Functionally, potent activator of prothrombin (F2). Does not elicit any hemorrhagic response. Barely inhibits collagen-induced platelet aggregation. Binds neither collagen, nor the jararhagin monoclonal antibody MAJar3. Hydrolyzes the Aalpha-chain of fibrin and fibrinogen, without affecting the Bbeta- and gamma-chains. Is capable of triggering endothelial pro-inflammatory and procoagulant cell responses, but fails to trigger apoptosis. Induces von Willebrand factor release, and the expression of both ICAM1 and E-selectin (SELE) (without increase in VCAM1) in endothelial cells (HUVEC). Is also able to up-regulate the synthesis of the coagulation factor TF (F3). Enhances nitric oxide (NO) generation, prostacyclin production and interleukin-8 release. In Bothrops erythromelas (Caatinga lance head), this protein is Zinc metalloproteinase-disintegrin-like berythractivase.